The sequence spans 343 residues: Protein RecA (343 aa).

Residue 65-72 (GPESSGKT) coordinates ATP.

This sequence belongs to the RecA family.

Its subcellular location is the cytoplasm. Can catalyze the hydrolysis of ATP in the presence of single-stranded DNA, the ATP-dependent uptake of single-stranded DNA by duplex DNA, and the ATP-dependent hybridization of homologous single-stranded DNAs. It interacts with LexA causing its activation and leading to its autocatalytic cleavage. The sequence is that of Protein RecA from Pseudoalteromonas atlantica (strain T6c / ATCC BAA-1087).